The following is a 277-amino-acid chain: Outer plastidial membrane protein porin (277 aa).

The protein belongs to the eukaryotic mitochondrial porin (TC 1.B.8.1) family.

The protein resides in the plastid outer membrane. In terms of biological role, forms a channel through the cell membrane that allows diffusion of small hydrophilic molecules. The channel adopts an open conformation at low or zero membrane potential and a closed conformation at potentials above 30-40 mV. The open state has a weak anion selectivity whereas the closed state is cation-selective. This chain is Outer plastidial membrane protein porin (POR1), found in Zea mays (Maize).